The primary structure comprises 157 residues: Peptide methionine sulfoxide reductase MsrA (157 aa).

Cys-10 is an active-site residue.

This sequence belongs to the MsrA Met sulfoxide reductase family.

The catalysed reaction is L-methionyl-[protein] + [thioredoxin]-disulfide + H2O = L-methionyl-(S)-S-oxide-[protein] + [thioredoxin]-dithiol. It carries out the reaction [thioredoxin]-disulfide + L-methionine + H2O = L-methionine (S)-S-oxide + [thioredoxin]-dithiol. In terms of biological role, has an important function as a repair enzyme for proteins that have been inactivated by oxidation. Catalyzes the reversible oxidation-reduction of methionine sulfoxide in proteins to methionine. The protein is Peptide methionine sulfoxide reductase MsrA of Clostridium botulinum (strain Loch Maree / Type A3).